The following is a 531-amino-acid chain: Putative F-box protein At2g02890 (531 aa).

An F-box domain is found at 141–188 (RHSSSLTNDLIEEILSRLHSKSVARFRCVSKQCASMFASPYFKKLFQT).

The sequence is that of Putative F-box protein At2g02890 from Arabidopsis thaliana (Mouse-ear cress).